The sequence spans 464 residues: MGSPGLRPELLLPQVLPLLLALLHVLPSQGFPGSGDSPLEDDGVWYSHSLYKDTPWCSPIKVKYGDVYCRAPPGGYYKTALGTRCDIRCRKGYELHGSSQLICQSNKRWSDKVICKQKRCPTLTMPANGGFKCVDGAYFNSRCEYYCSPGYTLKGERTVTCMDNKAWSGRPASCVDLEPPRIKCPSVKERIAEPNKLTVRVSWESPEGRDTADGILTDVILKGLPPGSNFPEGDHKIEYTVYDRAENKGTCKFRVKVRVRRCGKLNAPENGYMKCSSDGDNYGATCEFSCIGGYELQGSPARVCQSNLAWSGTEPSCAAMNVNVGVRTAAALLDQFYEKRRLLIVSTPTARNLLYRLQLGMLQQAQCGLDLRHVTVVELVGVFPTLIGRIRAKIMPPALALQLRLLLRIPLYSFSMVVVDKHGMDKERYVSLVTPMALFNLIDTFPLRKEEMILQAEMGQTCNV.

The first 30 residues, Met-1 to Gly-30, serve as a signal peptide directing secretion. O-linked (Xyl...) (chondroitin sulfate) serine glycosylation occurs at Ser-34. 5 disulfides stabilise this stretch: Cys-57-Cys-85, Cys-69-Cys-103, Cys-89-Cys-115, Cys-120-Cys-161, and Cys-147-Cys-174. 2 Sushi domains span residues Cys-57–Gln-117 and Lys-118–Asp-176. Residues Leu-177–Val-259 enclose the HYR domain. The Sushi 3 domain occupies Arg-260–Ala-319. Intrachain disulfides connect Cys-262–Cys-304 and Cys-290–Cys-317.

This is Sushi-repeat-containing protein SRPX (Srpx) from Mus musculus (Mouse).